Consider the following 118-residue polypeptide: NADH-quinone oxidoreductase subunit A (118 aa).

The next 3 helical transmembrane spans lie at Phe5–Met25, Phe61–Ala81, and Phe90–Trp110.

It belongs to the complex I subunit 3 family. NDH-1 is composed of 14 different subunits. Subunits NuoA, H, J, K, L, M, N constitute the membrane sector of the complex.

It is found in the cell membrane. It catalyses the reaction a quinone + NADH + 5 H(+)(in) = a quinol + NAD(+) + 4 H(+)(out). Functionally, NDH-1 shuttles electrons from NADH, via FMN and iron-sulfur (Fe-S) centers, to quinones in the respiratory chain. The immediate electron acceptor for the enzyme in this species is believed to be a menaquinone. Couples the redox reaction to proton translocation (for every two electrons transferred, four hydrogen ions are translocated across the cytoplasmic membrane), and thus conserves the redox energy in a proton gradient. The sequence is that of NADH-quinone oxidoreductase subunit A from Desulfitobacterium hafniense (strain Y51).